The chain runs to 200 residues: Transcription factor FapR (200 aa).

It belongs to the FapR family.

Transcriptional factor involved in regulation of membrane lipid biosynthesis by repressing genes involved in fatty acid and phospholipid metabolism. This is Transcription factor FapR from Thermoanaerobacter pseudethanolicus (strain ATCC 33223 / 39E) (Clostridium thermohydrosulfuricum).